A 947-amino-acid chain; its full sequence is Serrate RNA effector molecule homolog (947 aa).

4 disordered regions span residues 1-100 (MADS…GDGD), 300-492 (TINS…PSVG), 643-666 (DSNS…FNSQ), and 855-892 (NYLR…PPMY). 2 stretches are compositionally biased toward basic and acidic residues: residues 8–33 (YDRK…DRRP) and 40–49 (ARDEWAERNP). Tyrosine 79 carries the post-translational modification Phosphotyrosine. Serine 81 bears the Phosphoserine mark. Phosphothreonine is present on threonine 300. Serine 303, serine 330, serine 354, and serine 357 each carry phosphoserine. The segment covering 330-341 (SDEENWDDDNDA) has biased composition (acidic residues). Residues 345-366 (APKKELAEDSKDSDSKPEDKQL) show a composition bias toward basic and acidic residues. Over residues 367-376 (NKKKTKKRKR) the composition is skewed to basic residues. A compositionally biased stretch (basic and acidic residues) spans 393-427 (DEEKLKEKYDVEDGLRTEQKIEAEKDRQEATKAKQ). Serine 431 is modified (phosphoserine). Polar residues predominate over residues 465–479 (EISSNPIKNTDNGDS). Serine 644 and serine 646 each carry phosphoserine. The segment covering 646 to 657 (SARANESSENGS) has biased composition (low complexity).

The protein belongs to the ARS2 family. Interacts with cbp20, Dcr-2 and pasha.

Its subcellular location is the nucleus. Functionally, acts as a mediator between the cap-binding complex (CBC) and RNA-mediated gene silencing (RNAi). Involved in innate immunity via the short interfering RNAs (siRNAs) processing machinery by restricting the viral RNA production. Also involved microRNA (miRNA)-mediated silencing by contributing to the stability and delivery of primary miRNA transcripts to the primary miRNA processing complex containing drosha and pasha. In Drosophila simulans (Fruit fly), this protein is Serrate RNA effector molecule homolog (Ars2).